Here is a 422-residue protein sequence, read N- to C-terminus: Glutamate-1-semialdehyde 2,1-aminomutase (422 aa).

N6-(pyridoxal phosphate)lysine is present on lysine 264.

Belongs to the class-III pyridoxal-phosphate-dependent aminotransferase family. HemL subfamily. As to quaternary structure, homodimer. Pyridoxal 5'-phosphate is required as a cofactor.

The protein resides in the cytoplasm. The enzyme catalyses (S)-4-amino-5-oxopentanoate = 5-aminolevulinate. The protein operates within porphyrin-containing compound metabolism; protoporphyrin-IX biosynthesis; 5-aminolevulinate from L-glutamyl-tRNA(Glu): step 2/2. The chain is Glutamate-1-semialdehyde 2,1-aminomutase from Clostridium kluyveri (strain ATCC 8527 / DSM 555 / NBRC 12016 / NCIMB 10680 / K1).